Consider the following 145-residue polypeptide: Prefoldin subunit alpha (145 aa).

Belongs to the prefoldin alpha subunit family. As to quaternary structure, heterohexamer of two alpha and four beta subunits.

The protein localises to the cytoplasm. Molecular chaperone capable of stabilizing a range of proteins. Seems to fulfill an ATP-independent, HSP70-like function in archaeal de novo protein folding. This is Prefoldin subunit alpha from Nitrosopumilus maritimus (strain SCM1).